A 263-amino-acid chain; its full sequence is MNYLNKIRIENPLTICYTNDVVKNFTANGLLSIGASPAMSEAPEEAEEFYKVAQALLINIGTLTAQNEQDIIAIAQTANEAGLPIVFDPVAVGASTYRKQFCKLLLKSAKVSVIKGNASEILALIDDTATMKGTDSDANLDAVAIAKKAYAIYKTAIVITGKEDVIVQDNKAIVLANGSPLLARVTGAGCLLGGVIAGFLFRETEPDIEALIEAVSVFNIAAEVAAENENCGGPGTFSPLLLDTLYHLNETTYQQRIRIQEVE.

Substrate is bound at residue methionine 39. The ATP site is built by lysine 115 and threonine 160. Glycine 187 is a substrate binding site.

It belongs to the Thz kinase family. The cofactor is Mg(2+).

The enzyme catalyses 5-(2-hydroxyethyl)-4-methylthiazole + ATP = 4-methyl-5-(2-phosphooxyethyl)-thiazole + ADP + H(+). Its pathway is cofactor biosynthesis; thiamine diphosphate biosynthesis; 4-methyl-5-(2-phosphoethyl)-thiazole from 5-(2-hydroxyethyl)-4-methylthiazole: step 1/1. Functionally, catalyzes the phosphorylation of the hydroxyl group of 4-methyl-5-beta-hydroxyethylthiazole (THZ). The sequence is that of Hydroxyethylthiazole kinase from Staphylococcus aureus (strain JH9).